The primary structure comprises 832 residues: Protein P (832 aa).

The tract at residues 1–177 (MPLSYQHFRK…FCGSPYSWEQ (177 aa)) is terminal protein domain (TP). Positions 178–335 (ELQHGAESFH…YCLSHIVNLL (158 aa)) are spacer. Over residues 186–206 (FHQQSSGILSRPSVGSSLQSK) the composition is skewed to polar residues. Disordered regions lie at residues 186–255 (FHQQ…GHNA) and 280–305 (TSENHSSSGHAVELHNLPPNSARSQS). Low complexity predominate over residues 210-220 (SRLGLQSQQGH). A polymerase/reverse transcriptase domain (RT) region spans residues 336–679 (EDWGPCAEHG…YLNLYPVARQ (344 aa)). The Reverse transcriptase domain maps to 346–589 (EHHIRIPRTP…YSLNFMGYVI (244 aa)). Mg(2+)-binding residues include aspartate 418, aspartate 540, and aspartate 541.

This sequence belongs to the hepadnaviridae P protein family.

The catalysed reaction is DNA(n) + a 2'-deoxyribonucleoside 5'-triphosphate = DNA(n+1) + diphosphate. It catalyses the reaction Endonucleolytic cleavage to 5'-phosphomonoester.. With respect to regulation, activated by host HSP70 and HSP40 in vitro to be able to bind the epsilon loop of the pgRNA. Because deletion of the RNase H region renders the protein partly chaperone-independent, the chaperones may be needed indirectly to relieve occlusion of the RNA-binding site by this domain. Inhibited by several reverse-transcriptase inhibitors: Lamivudine, Adefovir and Entecavir. Multifunctional enzyme that converts the viral RNA genome into dsDNA in viral cytoplasmic capsids. This enzyme displays a DNA polymerase activity that can copy either DNA or RNA templates, and a ribonuclease H (RNase H) activity that cleaves the RNA strand of RNA-DNA heteroduplexes in a partially processive 3'- to 5'-endonucleasic mode. Neo-synthesized pregenomic RNA (pgRNA) are encapsidated together with the P protein, and reverse-transcribed inside the nucleocapsid. Initiation of reverse-transcription occurs first by binding the epsilon loop on the pgRNA genome, and is initiated by protein priming, thereby the 5'-end of (-)DNA is covalently linked to P protein. Partial (+)DNA is synthesized from the (-)DNA template and generates the relaxed circular DNA (RC-DNA) genome. After budding and infection, the RC-DNA migrates in the nucleus, and is converted into a plasmid-like covalently closed circular DNA (cccDNA). The activity of P protein does not seem to be necessary for cccDNA generation, and is presumably released from (+)DNA by host nuclear DNA repair machinery. The polypeptide is Protein P (Hepatitis B virus genotype D subtype ayw (isolate Australia/AustKW/1991) (HBV-D)).